Reading from the N-terminus, the 286-residue chain is 2-hydroxy-6-oxo-6-phenylhexa-2,4-dienoate hydrolase (286 aa).

Residues 42-43 (GG), Asn-51, Asn-111, Thr-180, and Arg-190 each bind substrate. His-265 serves as the catalytic Proton acceptor. Trp-266 is a substrate binding site.

The protein belongs to the AB hydrolase superfamily. BphD family. In terms of assembly, homodimer.

It catalyses the reaction 2,6-dioxo-6-phenylhexa-3-enoate + H2O = 2-oxopent-4-enoate + benzoate + H(+). It functions in the pathway xenobiotic degradation; biphenyl degradation; 2-hydroxy-2,4-pentadienoate and benzoate from biphenyl: step 4/4. Catalyzes an unusual C-C bond hydrolysis of 2-hydroxy-6-oxo-6-phenylhexa-2,4-dienoic acid (HOPDA) to produce benzoic acid and 2-hydroxy-2,4-pentadienoic acid (HPD). This chain is 2-hydroxy-6-oxo-6-phenylhexa-2,4-dienoate hydrolase, found in Comamonas testosteroni (Pseudomonas testosteroni).